An 824-amino-acid polypeptide reads, in one-letter code: Disintegrin and metalloproteinase domain-containing protein 8 (824 aa).

Residues 1–16 form the signal peptide; sequence MRGLGLWLLGAMMLPA. The Extracellular segment spans residues 17-655; the sequence is IAPSRPWALM…EVHAASGSLP (639 aa). 2 N-linked (GlcNAc...) asparagine glycosylation sites follow: asparagine 67 and asparagine 91. Residues 200–400 enclose the Peptidase M12B domain; sequence RYVELYVVVD…PQSVCLANAP (201 aa). Disulfide bonds link cysteine 310–cysteine 395, cysteine 351–cysteine 379, cysteine 353–cysteine 362, cysteine 435–cysteine 457, cysteine 448–cysteine 454, cysteine 466–cysteine 486, cysteine 473–cysteine 503, cysteine 498–cysteine 508, cysteine 566–cysteine 613, cysteine 613–cysteine 623, cysteine 617–cysteine 629, and cysteine 631–cysteine 640. Histidine 334 serves as a coordination point for Zn(2+). Glutamate 335 is an active-site residue. Zn(2+) contacts are provided by histidine 338 and histidine 344. A Disintegrin domain is found at 408–494; that stretch reads GPVCGNLFVE…ECPEDAFQEN (87 aa). Asparagine 436 carries an N-linked (GlcNAc...) asparagine glycan. One can recognise an EGF-like domain in the interval 609–641; the sequence is RSSNCSAQCHNHGVCNHKQECHCHAGWAPPHCA. Residue asparagine 612 is glycosylated (N-linked (GlcNAc...) asparagine). Residues 656–676 traverse the membrane as a helical segment; it reads VFVVVVLVLLAVVLVTLAGII. Topologically, residues 677 to 824 are cytoplasmic; sequence VYRKARSRIL…KQGAGAPTAP (148 aa). 2 disordered regions span residues 710–756 and 776–824; these read VPAK…PVTV and KPTF…PTAP. Pro residues predominate over residues 747-756; that stretch reads RPPPAPPVTV. Low complexity predominate over residues 788–804; sequence PGAGAANPGPAEGAVGP.

As to quaternary structure, interacts with FST3. Zn(2+) is required as a cofactor. Expressed on neutrophils and monocytes.

The protein resides in the membrane. Possible involvement in extravasation of leukocytes. This is Disintegrin and metalloproteinase domain-containing protein 8 (ADAM8) from Homo sapiens (Human).